The sequence spans 347 residues: 4-hydroxy-3-methylbut-2-en-1-yl diphosphate synthase (flavodoxin) (347 aa).

The [4Fe-4S] cluster site is built by Cys259, Cys262, Cys294, and Glu301.

Belongs to the IspG family. [4Fe-4S] cluster serves as cofactor.

It catalyses the reaction (2E)-4-hydroxy-3-methylbut-2-enyl diphosphate + oxidized [flavodoxin] + H2O + 2 H(+) = 2-C-methyl-D-erythritol 2,4-cyclic diphosphate + reduced [flavodoxin]. Its pathway is isoprenoid biosynthesis; isopentenyl diphosphate biosynthesis via DXP pathway; isopentenyl diphosphate from 1-deoxy-D-xylulose 5-phosphate: step 5/6. In terms of biological role, converts 2C-methyl-D-erythritol 2,4-cyclodiphosphate (ME-2,4cPP) into 1-hydroxy-2-methyl-2-(E)-butenyl 4-diphosphate. This chain is 4-hydroxy-3-methylbut-2-en-1-yl diphosphate synthase (flavodoxin), found in Caldicellulosiruptor saccharolyticus (strain ATCC 43494 / DSM 8903 / Tp8T 6331).